Here is a 581-residue protein sequence, read N- to C-terminus: Arginine--tRNA ligase (581 aa).

The 'HIGH' region motif lies at 126-136 (PNLAKEMHVGH).

Belongs to the class-I aminoacyl-tRNA synthetase family. In terms of assembly, monomer.

The protein localises to the cytoplasm. It carries out the reaction tRNA(Arg) + L-arginine + ATP = L-arginyl-tRNA(Arg) + AMP + diphosphate. This Shewanella baltica (strain OS223) protein is Arginine--tRNA ligase.